Here is a 358-residue protein sequence, read N- to C-terminus: MGKKIVFTGGGTVGHVTLNLILIPKFIKDGWEVHYIGDKNGIEHEQINQSGLDITFHSIATGKLRRYFSWQNMLDVFKVGVGVLQSIAIIAKLRPQALFSKGGFVSVPPVVAARLLKVPVFVHESDLSMGLANKIAYKFATIMYTTFEQSKDLIKTKHIGAVTKVMDCKKSFENTDLTSIKEAFDPNLKTLLFIGGSAGAKVFNDFITQTPELEEKYNVINISGDSSLNRLKKNLYRVDYVTDLYQPLMNLADVVVTRGGSNTIFELVAMKKLHLIIPLGREASRGDQLENAAYFEEKGYALQLPESELNINTLEKQINLLISNSESYEKNMSQSSEIKSQDEFYQLLIDDMAKVTKG.

Positions 197 and 288 each coordinate UDP-N-acetyl-alpha-D-glucosamine.

It belongs to the glycosyltransferase 28 family. MurG subfamily.

It localises to the cell membrane. The enzyme catalyses Mur2Ac(oyl-L-Ala-gamma-D-Glu-L-Lys-D-Ala-D-Ala)-di-trans,octa-cis-undecaprenyl diphosphate + UDP-N-acetyl-alpha-D-glucosamine = beta-D-GlcNAc-(1-&gt;4)-Mur2Ac(oyl-L-Ala-gamma-D-Glu-L-Lys-D-Ala-D-Ala)-di-trans,octa-cis-undecaprenyl diphosphate + UDP + H(+). Its pathway is cell wall biogenesis; peptidoglycan biosynthesis. Its function is as follows. Cell wall formation. Catalyzes the transfer of a GlcNAc subunit on undecaprenyl-pyrophosphoryl-MurNAc-pentapeptide (lipid intermediate I) to form undecaprenyl-pyrophosphoryl-MurNAc-(pentapeptide)GlcNAc (lipid intermediate II). The polypeptide is UDP-N-acetylglucosamine--N-acetylmuramyl-(pentapeptide) pyrophosphoryl-undecaprenol N-acetylglucosamine transferase (Streptococcus agalactiae serotype Ia (strain ATCC 27591 / A909 / CDC SS700)).